The chain runs to 291 residues: ATP synthase gamma chain (291 aa).

It belongs to the ATPase gamma chain family. As to quaternary structure, F-type ATPases have 2 components, CF(1) - the catalytic core - and CF(0) - the membrane proton channel. CF(1) has five subunits: alpha(3), beta(3), gamma(1), delta(1), epsilon(1). CF(0) has three main subunits: a, b and c.

It is found in the cell inner membrane. Produces ATP from ADP in the presence of a proton gradient across the membrane. The gamma chain is believed to be important in regulating ATPase activity and the flow of protons through the CF(0) complex. The chain is ATP synthase gamma chain from Variovorax paradoxus (strain S110).